The primary structure comprises 1013 residues: Poly [ADP-ribose] polymerase 1 (1013 aa).

2 consecutive PARP-type zinc fingers follow at residues Y10–G92 and F113–K203. C22, C25, H54, C57, C125, C128, H159, and C162 together coordinate Zn(2+). Residues V202–L228 are disordered. The Nuclear localization signal motif lies at K207–K209. In terms of domain architecture, PADR1 zinc-binding spans K219–K353. Residues G284–D326 form a zinc ribbon region. C289, C292, C305, and C315 together coordinate Zn(2+). A disordered region spans residues K353–P385. Positions P356–S378 are enriched in low complexity. The interval G365–K523 is automodification domain. Residues P385–D461 enclose the BRCT domain. A polyADP-ribosyl glutamic acid mark is found at E413, E435, E444, E445, E464, E471, E484, and E488. The segment covering A494 to T507 has biased composition (low complexity). Residues A494–M522 are disordered. PolyADP-ribosyl glutamic acid occurs at positions 512 and 513. A WGR domain is found at C541–F637. Positions K661–R778 constitute a PARP alpha-helical domain. One can recognise a PARP catalytic domain in the interval D787–W1013. NAD(+) contacts are provided by residues H861–S863, G870, R877, and S903. E987 serves as the catalytic For poly [ADP-ribose] polymerase activity.

Belongs to the ARTD/PARP family. As to quaternary structure, homodimer; PARP-type zinc-fingers from separate parp1 molecules form a dimer module that specifically recognizes DNA strand breaks. Post-translationally, poly-ADP-ribosylated on serine, glutamate and aspartate residues by autocatalysis. Auto-ADP-ribosylation on serine takes place following interaction with HPF1. Auto poly-ADP-ribosylation on serine residues promotes its dissociation from chromatin.

It localises to the chromosome. The protein localises to the nucleus. It is found in the nucleolus. Its subcellular location is the cytoplasm. The protein resides in the cytosol. The catalysed reaction is NAD(+) + (ADP-D-ribosyl)n-acceptor = nicotinamide + (ADP-D-ribosyl)n+1-acceptor + H(+).. It catalyses the reaction L-seryl-[protein] + NAD(+) = O-(ADP-D-ribosyl)-L-seryl-[protein] + nicotinamide + H(+). The enzyme catalyses L-aspartyl-[protein] + NAD(+) = 4-O-(ADP-D-ribosyl)-L-aspartyl-[protein] + nicotinamide. It carries out the reaction L-glutamyl-[protein] + NAD(+) = 5-O-(ADP-D-ribosyl)-L-glutamyl-[protein] + nicotinamide. The catalysed reaction is L-tyrosyl-[protein] + NAD(+) = O-(ADP-D-ribosyl)-L-tyrosyl-[protein] + nicotinamide + H(+). It catalyses the reaction L-histidyl-[protein] + NAD(+) = N(tele)-(ADP-D-ribosyl)-L-histidyl-[protein] + nicotinamide + H(+). With respect to regulation, ADP-ribosyltransferase activity is regulated via an allosteric activation mechanism. In absence of activation signal, parp1 is autoinhibited by the PARP alpha-helical domain (also named HD region), which prevents effective NAD(+)-binding. Activity is highly stimulated by signals, such as DNA strand breaks. Binding to damaged DNA unfolds the PARP alpha-helical domain, relieving autoinhibition. Poly-ADP-ribosyltransferase activity is tightly regulated and parp1 is removed from damaged chromatin following initial poly-ADP-ribosylation of chromatin to avoid prolonged residence (trapping) that has cytotoxic consequences. A number of factors or post-translational modifications (auto-poly-ADP-ribosylation) promote parp1 removal from chromatin. Functionally, poly-ADP-ribosyltransferase that mediates poly-ADP-ribosylation of proteins and plays a key role in DNA repair. Mediates glutamate, aspartate, serine, histidine or tyrosine ADP-ribosylation of proteins: the ADP-D-ribosyl group of NAD(+) is transferred to the acceptor carboxyl group of target residues and further ADP-ribosyl groups are transferred to the 2'-position of the terminal adenosine moiety, building up a polymer with an average chain length of 20-30 units. Serine ADP-ribosylation of proteins constitutes the primary form of ADP-ribosylation of proteins in response to DNA damage. Specificity for the different amino acids is conferred by interacting factors, such as hpf1 and nmnat1. Following interaction with hpf1, catalyzes serine ADP-ribosylation of target proteins; hpf1 confers serine specificity by completing the parp1 active site. Also catalyzes tyrosine ADP-ribosylation of target proteins following interaction with hpf1. Following interaction with nmnat1, catalyzes glutamate and aspartate ADP-ribosylation of target proteins; nmnat1 confers glutamate and aspartate specificity. Parp1 initiates the repair of DNA breaks: recognizes and binds DNA breaks within chromatin and recruits hpf1, licensing serine ADP-ribosylation of target proteins, such as histones (H2BS6ADPr and H3S10ADPr), thereby promoting decompaction of chromatin and the recruitment of repair factors leading to the reparation of DNA strand breaks. In addition to base excision repair (BER) pathway, also involved in double-strand breaks (DSBs) repair. Mediates the poly-ADP-ribosylation of a number of proteins. In addition to proteins, also able to ADP-ribosylate DNA: catalyzes ADP-ribosylation of DNA strand break termini containing terminal phosphates and a 2'-OH group in single- and double-stranded DNA, respectively. Parp1-mediated DNA repair in neurons plays a role in sleep: senses DNA damage in neurons and promotes sleep, facilitating efficient DNA repair. In addition to DNA repair, also involved in other processes, such as transcription regulation, programmed cell death, membrane repair, adipogenesis and innate immunity. Acts as a repressor of transcription: binds to nucleosomes and modulates chromatin structure in a manner similar to histone H1, thereby altering RNA polymerase II. Acts both as a positive and negative regulator of transcription elongation, depending on the context. Poly-ADP-ribose chains generated by parp1 also play a role in poly-ADP-ribose-dependent cell death, a process named parthanatos. Also acts as a negative regulator of the cGAS-STING pathway by mediating poly-ADP-ribosylation and inactivation of cgas. Acts as a negative regulator of adipogenesis by catalyzing poly ADP-ribosylation of histone H2B on 'Glu-35' (H2BE35ADPr). In Danio rerio (Zebrafish), this protein is Poly [ADP-ribose] polymerase 1.